The following is an 87-amino-acid chain: Large ribosomal subunit protein bL31B (87 aa).

Belongs to the bacterial ribosomal protein bL31 family. Type B subfamily. In terms of assembly, part of the 50S ribosomal subunit.

The sequence is that of Large ribosomal subunit protein bL31B from Burkholderia multivorans (strain ATCC 17616 / 249).